Reading from the N-terminus, the 354-residue chain is Cysteine proteinase 1 (354 aa).

The first 24 residues, 1–24 (MARRNPLLFAIVVTILFVVCYGSA), serve as a signal peptide directing secretion. A propeptide spans 25-125 (LIAQTPPPVD…HKEDVHVDDS (101 aa)) (activation peptide). Cystine bridges form between C150-C191, C184-C229, and C282-C330. Residue C153 is part of the active site. N-linked (GlcNAc...) asparagine glycosylation is present at N208. Residues H289 and N309 contribute to the active site.

Belongs to the peptidase C1 family.

The cysteine proteinases have a potential role in host-parasite interaction and virulence. The polypeptide is Cysteine proteinase 1 (CYS1) (Leishmania pifanoi).